Reading from the N-terminus, the 319-residue chain is 12-(S)-hydroxy-5,8,10,14-eicosatetraenoic acid receptor (319 aa).

Residues 1–16 (MERTNCSAASTVVETA) are Extracellular-facing. Asn-5 carries N-linked (GlcNAc...) asparagine glycosylation. A helical membrane pass occupies residues 17–37 (VGTMLTLECVLGLMGNAVALW). At 38–52 (TFFYRLKVWKPYAVY) the chain is on the cytoplasmic side. A helical transmembrane segment spans residues 53-73 (LFNLVVADLLLATSLPFFAAF). The Extracellular segment spans residues 74 to 91 (YLKGKTWKLGHMPCQVLL). A helical transmembrane segment spans residues 92-110 (FLLAFSRGVGVAFLTTVAL). Residues 111–131 (DRYLRVVHPRLRVNLLSLRAA) are Cytoplasmic-facing. Residues 132–152 (WGISSLIWLLMVVLTPQNLLT) form a helical membrane-spanning segment. Residues 153–180 (CRTTQNSTECPSFYPTGGAKAIATCQEV) lie on the Extracellular side of the membrane. A helical transmembrane segment spans residues 181 to 201 (LFFLQVLLPFGLISFCNSGLI). The Cytoplasmic portion of the chain corresponds to 202-219 (RTLQKRLRESDKQPRIRR). Residues 220 to 240 (ARVLVAIVLLLFGLCFLPSVL) traverse the membrane as a helical segment. Residues 241 to 265 (TRVLVHIFQEFKSCSVQQAIVRASD) are Extracellular-facing. The chain crosses the membrane as a helical span at residues 266–284 (IAGSLTCLHSTLSPAIYCF). Topologically, residues 285-319 (SNPAFTHSYRKVLKSLRGRRKAAESPSDNLRDSYS) are cytoplasmic.

The protein belongs to the G-protein coupled receptor 1 family. As to quaternary structure, interacts with KRAS; in a farnesylation-dependent manner.

It localises to the cell membrane. High-affinity receptor for 12-(S)-hydroxy-5,8,10,14-eicosatetraenoic acid (12-S-HETE), with much lower affinities for other HETE isomers. 12-S-HETE is a eicosanoid, a 12-lipoxygenase (ALOX12) metabolite of arachidonic acid, involved in many physiologic and pathologic processes, such as cell growth, adhesion, inflammation and cancer promotion. 12-S-HETE-binding leads to activation of ERK1/2 (MAPK3/MAPK1), MEK, and NF-kappa-B pathways and leads to cell growth. Plays a crucial role for proliferation, survival and macropinocytosis of KRAS-dependent cancer cells by mediating the translocation of KRAS from the endoplasmic reticulum to the plasma membrane (PM) and its association with the PM. Contributes to enhanced immune responses by inducing dendrite protrusion of small intestinal CX3CR1(+) phagocytes for the uptake of luminal antigens. Also acts as a key receptor for 12-(S)-HETE-mediated liver ischemia reperfusion injury. In terms of biological role, proton-sensing G protein-coupled receptor. The chain is 12-(S)-hydroxy-5,8,10,14-eicosatetraenoic acid receptor (Gpr31) from Mus musculus (Mouse).